The sequence spans 276 residues: MAVKKFKPYTPSRRFMTVADFSEITKTEPEKSLVKPLKKTGGRNNQGRITVRFRGGGHKRLYRIIDFKRWDKVGIPAKVAAIEYDPNRSARIALLHYVDGEKRYIIAPDGLQVGQQVVAGPDAPIQVGNALPLRFIPVGTVVHAVELEPKKGAKLARAAGTSAQIQGREGDYVILRLPSGELRKVHGECYATVGAVGNADHKNIVLGKAGRSRWLGRRPHVRGAAMNPVDHPHGGGEGRAPRGRPPASPWGWQTKGLKTRKRRKPSSRFIIARRKK.

Residues Gly223–Lys276 form a disordered region. Residues Asp230–Ala240 are compositionally biased toward basic and acidic residues. Residues Leu257–Lys276 show a composition bias toward basic residues.

Belongs to the universal ribosomal protein uL2 family. As to quaternary structure, part of the 50S ribosomal subunit. Forms a bridge to the 30S subunit in the 70S ribosome.

Its function is as follows. One of the primary rRNA binding proteins. Required for association of the 30S and 50S subunits to form the 70S ribosome, for tRNA binding and peptide bond formation. It has been suggested to have peptidyltransferase activity; this is somewhat controversial. Makes several contacts with the 16S rRNA in the 70S ribosome. This chain is Large ribosomal subunit protein uL2, found in Thermus thermophilus (strain ATCC BAA-163 / DSM 7039 / HB27).